The primary structure comprises 105 residues: uncharacterized protein (105 aa).

The protein belongs to the M.jannaschii MJ0023/MJ0349/MJ1072/MJ1074/MJ1107/MJECL16 family.

This is an uncharacterized protein from Methanocaldococcus jannaschii (strain ATCC 43067 / DSM 2661 / JAL-1 / JCM 10045 / NBRC 100440) (Methanococcus jannaschii).